A 66-amino-acid polypeptide reads, in one-letter code: MPAKTGPRVVVFLECFHCTQKGAQKKFPGVFRYITKKNRHNKSTPLELKKFCPFCLKHTIHKERKK.

Belongs to the bacterial ribosomal protein bL33 family.

It localises to the plastid. It is found in the chloroplast. The chain is Large ribosomal subunit protein bL33c from Welwitschia mirabilis (Tree tumbo).